We begin with the raw amino-acid sequence, 357 residues long: MFLEKLSPIESKIKILEEKLQDINLVKNQKEYAKTVKEYNYLEKIKAKKDEYENILSQINENQKILSEEENLEMKELVKQELAHLNLKKDEVEHMIKILLLHQDENDSKNIIIEIRAGTGGEEAALFAHNLYEMYTKYSEKKKWKTELINFNETELGGFKEVSFEIKGKDVFKKLKHESGVHRVQRVPITESNGRLQTSAATVAVLPEVEDTDIEINEKDLRIDVYRSSGAGGQHVNTTDSAVRITHLPTGIVVQCQNERSQHKNKDQAMKILRARLYEFENLKKQEQRSNDRKQQVGSGDRSERIRTYNFPQNRVTDHRANISLYKLEEIMQGELDFLLDTLALKFQEQSLKDNSI.

Residue Q234 is modified to N5-methylglutamine. Residues 284–307 show a composition bias toward basic and acidic residues; that stretch reads KKQEQRSNDRKQQVGSGDRSERIR. Residues 284–313 form a disordered region; it reads KKQEQRSNDRKQQVGSGDRSERIRTYNFPQ.

Belongs to the prokaryotic/mitochondrial release factor family. Post-translationally, methylated by PrmC. Methylation increases the termination efficiency of RF1.

It localises to the cytoplasm. Peptide chain release factor 1 directs the termination of translation in response to the peptide chain termination codons UAG and UAA. This Borrelia hermsii (strain HS1 / DAH) protein is Peptide chain release factor 1.